We begin with the raw amino-acid sequence, 457 residues long: Multidrug resistance protein MdtK (457 aa).

12 consecutive transmembrane segments (helical) span residues 11–31 (LLAL…MGVV), 53–73 (IWLP…PIVA), 93–113 (WLAT…RFII), 127–147 (AIGF…YQVL), 160–180 (GMII…AFIY), 188–208 (LGGI…FLMM), 243–263 (LPVG…ALLV), 276–296 (IALN…IAAT), 316–336 (ITAL…SIIF), 357–377 (LMLF…GSGV), 387–407 (IFFI…YLLG), and 416–436 (MGPA…AIMM).

The protein belongs to the multi antimicrobial extrusion (MATE) (TC 2.A.66.1) family. MdtK subfamily.

It localises to the cell inner membrane. Multidrug efflux pump that functions probably as a Na(+)/drug antiporter. In Proteus mirabilis (strain HI4320), this protein is Multidrug resistance protein MdtK.